A 439-amino-acid polypeptide reads, in one-letter code: Phenylacetate-coenzyme A ligase (439 aa).

The protein belongs to the phenylacetyl-CoA ligase family. As to quaternary structure, monomer.

It catalyses the reaction 2-phenylacetate + ATP + CoA = phenylacetyl-CoA + AMP + diphosphate. The protein operates within aromatic compound metabolism; phenylacetate degradation. Inhibited by divalent cations (zinc, copper, mercury) and by the sulfhydryl reagents 5,5-dithiobis(2-nitrobenzoic acid), N-ethylmaleimide and p-chloromercuribenzoate. Catalyzes the activation of phenylacetic acid (PA) to phenylacetyl-CoA (PA-CoA). Involved in the phenylalanine metabolism. Can also use CTP and UTP as substrate. The protein is Phenylacetate-coenzyme A ligase (paaK) of Pseudomonas putida (Arthrobacter siderocapsulatus).